The sequence spans 406 residues: Putative 12-oxophytodienoate reductase 12 (406 aa).

Residues proline 41–threonine 43, alanine 74, and glutamine 119 each bind FMN. Histidine 188 to asparagine 191 contributes to the substrate binding site. FMN is bound by residues arginine 240, glycine 317, and glycine 338 to arginine 339.

It belongs to the NADH:flavin oxidoreductase/NADH oxidase family. Requires FMN as cofactor.

Putative oxophytodienoate reductase that may be involved in the biosynthesis or metabolism of oxylipin signaling molecules. The sequence is that of Putative 12-oxophytodienoate reductase 12 (OPR12) from Oryza sativa subsp. japonica (Rice).